A 92-amino-acid chain; its full sequence is Small ribosomal subunit protein uS19 (92 aa).

Belongs to the universal ribosomal protein uS19 family.

Functionally, protein S19 forms a complex with S13 that binds strongly to the 16S ribosomal RNA. This is Small ribosomal subunit protein uS19 from Prochlorococcus marinus (strain MIT 9215).